Here is a 290-residue protein sequence, read N- to C-terminus: Tubulin polyglutamylase complex subunit 1 (290 aa).

A disordered region spans residues 1 to 30; that stretch reads MAAVEKRRQAVPPPAGFTDSGRQSVSRAAG. Phosphoserine occurs at positions 34 and 266.

Part of the neuronal tubulin polyglutamylase complex which contains TPGS1, TPGS2, TTLL1, LRRC49 and NICN1. Interacts with PCM1, CSTPP1 and LRRC49.

It localises to the cytoplasm. Its subcellular location is the cytoskeleton. The protein resides in the cilium axoneme. It is found in the flagellum axoneme. The protein localises to the cilium basal body. It localises to the flagellum basal body. Its subcellular location is the cell projection. The protein resides in the axon. It is found in the dendrite. The protein localises to the microtubule organizing center. It localises to the centrosome. Its subcellular location is the centriolar satellite. Functionally, subunit of the tubulin polyglutamylase complex (TPGC). The complex mediates cilia and flagella polyglutamylation which is essential for their biogenesis and motility. May act in the targeting of the tubulin polyglutamylase complex. Required for the development of the spermatid flagellum. The sequence is that of Tubulin polyglutamylase complex subunit 1 from Homo sapiens (Human).